Consider the following 84-residue polypeptide: Sec-independent protein translocase protein TatA (84 aa).

A helical membrane pass occupies residues 1-21; that stretch reads MGGISIWQLLIVAVIVVLLFG. Composition is skewed to basic and acidic residues over residues 42–55 and 64–84; these read AMSDDDAKQDKTSQ and IADKQGEAKKEDAKSQDKEQV. Residues 42-84 form a disordered region; the sequence is AMSDDDAKQDKTSQDADFTAKSIADKQGEAKKEDAKSQDKEQV.

This sequence belongs to the TatA/E family. The Tat system comprises two distinct complexes: a TatABC complex, containing multiple copies of TatA, TatB and TatC subunits, and a separate TatA complex, containing only TatA subunits. Substrates initially bind to the TatABC complex, which probably triggers association of the separate TatA complex to form the active translocon.

The protein resides in the cell inner membrane. Functionally, part of the twin-arginine translocation (Tat) system that transports large folded proteins containing a characteristic twin-arginine motif in their signal peptide across membranes. TatA could form the protein-conducting channel of the Tat system. The chain is Sec-independent protein translocase protein TatA from Salmonella typhi.